A 398-amino-acid chain; its full sequence is 8-amino-7-oxononanoate synthase (398 aa).

Arginine 23 lines the substrate pocket. A pyridoxal 5'-phosphate-binding site is contributed by 110-111 (GY). Histidine 135 contributes to the substrate binding site. Residues serine 181, histidine 209, and threonine 237 each coordinate pyridoxal 5'-phosphate. The residue at position 240 (lysine 240) is an N6-(pyridoxal phosphate)lysine. Threonine 354 contributes to the substrate binding site.

This sequence belongs to the class-II pyridoxal-phosphate-dependent aminotransferase family. BioF subfamily. As to quaternary structure, homodimer. The cofactor is pyridoxal 5'-phosphate.

It carries out the reaction 6-carboxyhexanoyl-[ACP] + L-alanine + H(+) = (8S)-8-amino-7-oxononanoate + holo-[ACP] + CO2. The protein operates within cofactor biosynthesis; biotin biosynthesis. Functionally, catalyzes the decarboxylative condensation of pimeloyl-[acyl-carrier protein] and L-alanine to produce 8-amino-7-oxononanoate (AON), [acyl-carrier protein], and carbon dioxide. The polypeptide is 8-amino-7-oxononanoate synthase (Anaeromyxobacter sp. (strain K)).